A 162-amino-acid polypeptide reads, in one-letter code: Putative 4-hydroxy-4-methyl-2-oxoglutarate aldolase (162 aa).

Substrate contacts are provided by residues 75 to 78 and R97; that span reads GDML. D98 contributes to the a divalent metal cation binding site.

It belongs to the class II aldolase/RraA-like family. Homotrimer. The cofactor is a divalent metal cation.

The catalysed reaction is 4-hydroxy-4-methyl-2-oxoglutarate = 2 pyruvate. It catalyses the reaction oxaloacetate + H(+) = pyruvate + CO2. Its function is as follows. Catalyzes the aldol cleavage of 4-hydroxy-4-methyl-2-oxoglutarate (HMG) into 2 molecules of pyruvate. Also contains a secondary oxaloacetate (OAA) decarboxylase activity due to the common pyruvate enolate transition state formed following C-C bond cleavage in the retro-aldol and decarboxylation reactions. This is Putative 4-hydroxy-4-methyl-2-oxoglutarate aldolase from Azotobacter vinelandii (strain DJ / ATCC BAA-1303).